The sequence spans 217 residues: Zinc finger CCHC-type and RNA-binding motif-containing protein 1 (217 aa).

In terms of domain architecture, RRM spans 10–88 (STVYVSNLPF…RVIKASIAID (79 aa)). Residues 105 to 122 (SKCYECGESGHLSYACPK) form a CCHC-type zinc finger. The interval 120-217 (CPKNMLGERE…YFSDEEELSD (98 aa)) is disordered. Acidic residues predominate over residues 145-163 (PEEEIEEVEESEDEGEDPA). Ser-155, Ser-210, and Ser-216 each carry phosphoserine.

In terms of assembly, component of the U11/U12 snRNPs that are part of the U12-type spliceosome. Interacts with ZRSR1.

The protein localises to the nucleus. It is found in the nucleoplasm. In Bos taurus (Bovine), this protein is Zinc finger CCHC-type and RNA-binding motif-containing protein 1 (ZCRB1).